The following is a 589-amino-acid chain: uncharacterized protein (589 aa).

A run of 5 helical transmembrane segments spans residues 11-31 (LNWILTALFWVVLCFSVTMLA), 57-77 (LILMLLVLFIMILLEVRFSVL), 97-117 (FWFFAKLNALLVVAQVIHAIA), 190-210 (IEFTIILWSLSGVLTLFGFNI), and 213-233 (GVVFFIYAFIIFATLMSVWIG). Residues 57-357 (LILMLLVLFI…FRLFYEQFTL (301 aa)) enclose the ABC transmembrane type-1 domain. Positions 390 to 587 (VALKNFGIKD…QLKLDVCLLC (198 aa)) constitute an ABC transporter domain. 423–430 (GASGTGKT) serves as a coordination point for ATP.

The protein belongs to the ABC transporter superfamily.

It is found in the cell inner membrane. This is an uncharacterized protein from Haemophilus influenzae (strain ATCC 51907 / DSM 11121 / KW20 / Rd).